Here is a 309-residue protein sequence, read N- to C-terminus: Tagatose-6-phosphate kinase (309 aa).

This sequence belongs to the carbohydrate kinase PfkB family. LacC subfamily.

It carries out the reaction D-tagatofuranose 6-phosphate + ATP = D-tagatofuranose 1,6-bisphosphate + ADP + H(+). It participates in carbohydrate metabolism; D-tagatose 6-phosphate degradation; D-glyceraldehyde 3-phosphate and glycerone phosphate from D-tagatose 6-phosphate: step 1/2. This Streptococcus pyogenes serotype M6 (strain ATCC BAA-946 / MGAS10394) protein is Tagatose-6-phosphate kinase.